We begin with the raw amino-acid sequence, 245 residues long: Probable octanoyltransferase 2 (245 aa).

The region spanning 38–227 is the BPL/LPL catalytic domain; it reads MEYKPVLYFQ…SIEKEFDIKE (190 aa). Substrate contacts are provided by residues 89 to 96, 157 to 159, and 170 to 172; these read RGGYETYH, SIG, and GMA. Residue C188 is the Acyl-thioester intermediate of the active site.

The protein belongs to the LipB family.

The protein resides in the cytoplasm. It catalyses the reaction octanoyl-[ACP] + L-lysyl-[protein] = N(6)-octanoyl-L-lysyl-[protein] + holo-[ACP] + H(+). It participates in protein modification; protein lipoylation via endogenous pathway; protein N(6)-(lipoyl)lysine from octanoyl-[acyl-carrier-protein]: step 1/2. Catalyzes the transfer of endogenously produced octanoic acid from octanoyl-acyl-carrier-protein onto the lipoyl domains of lipoate-dependent enzymes. Lipoyl-ACP can also act as a substrate although octanoyl-ACP is likely to be the physiological substrate. This is Probable octanoyltransferase 2 from Picrophilus torridus (strain ATCC 700027 / DSM 9790 / JCM 10055 / NBRC 100828 / KAW 2/3).